Consider the following 429-residue polypeptide: Glutamate-1-semialdehyde 2,1-aminomutase 2 (429 aa).

N6-(pyridoxal phosphate)lysine is present on Lys-268.

It belongs to the class-III pyridoxal-phosphate-dependent aminotransferase family. HemL subfamily. In terms of assembly, homodimer. Pyridoxal 5'-phosphate is required as a cofactor.

Its subcellular location is the cytoplasm. It catalyses the reaction (S)-4-amino-5-oxopentanoate = 5-aminolevulinate. Its pathway is porphyrin-containing compound metabolism; protoporphyrin-IX biosynthesis; 5-aminolevulinate from L-glutamyl-tRNA(Glu): step 2/2. In Geobacillus kaustophilus (strain HTA426), this protein is Glutamate-1-semialdehyde 2,1-aminomutase 2.